We begin with the raw amino-acid sequence, 246 residues long: Transcription factor A, mitochondrial (246 aa).

The N-terminal 42 residues, M1–F42, are a transit peptide targeting the mitochondrion. A DNA-binding region (HMG box 1) is located at residues P50–K118. Phosphoserine; by PKA occurs at positions 55, 56, and 61. At T122 the chain carries Phosphothreonine. The HMG box 2 DNA-binding region spans P155–E219. At S160 the chain carries Phosphoserine; by PKA. A phosphoserine mark is found at S193 and S195.

In terms of assembly, monomer; binds DNA as a monomer. Homodimer. Component of the mitochondrial transcription initiation complex, composed at least of TFB2M, TFAM and POLRMT. In this complex TFAM recruits POLRMT to the promoter whereas TFB2M induces structural changes in POLRMT to enable promoter opening and trapping of the DNA non-template strand. Upon metabolic stress, forms a complex composed of FOXO3, SIRT3, TFAM and POLRMT. Interacts with TFB1M and TFB2M. Interacts with CLPX; this enhances DNA-binding. Phosphorylation by PKA within the HMG box 1 impairs DNA binding and promotes degradation by the AAA+ Lon protease.

Its subcellular location is the mitochondrion. The protein localises to the mitochondrion matrix. It is found in the mitochondrion nucleoid. In terms of biological role, binds to the mitochondrial light strand promoter and functions in mitochondrial transcription regulation. Component of the mitochondrial transcription initiation complex, composed at least of TFB2M, TFAM and POLRMT that is required for basal transcription of mitochondrial DNA. In this complex, TFAM recruits POLRMT to a specific promoter whereas TFB2M induces structural changes in POLRMT to enable promoter opening and trapping of the DNA non-template strand. Required for accurate and efficient promoter recognition by the mitochondrial RNA polymerase. Promotes transcription initiation from the HSP1 and the light strand promoter by binding immediately upstream of transcriptional start sites. Is able to unwind DNA. Bends the mitochondrial light strand promoter DNA into a U-turn shape via its HMG boxes. Required for maintenance of normal levels of mitochondrial DNA. May play a role in organizing and compacting mitochondrial DNA. The polypeptide is Transcription factor A, mitochondrial (Homo sapiens (Human)).